The primary structure comprises 782 residues: Probable cyclic di-GMP phosphodiesterase PdeI (782 aa).

The next 2 membrane-spanning stretches (helical) occupy residues 12–32 and 286–306; these read LIILFLLAALSFIGLFFIINY and LFYLPFAFIIIVLLVVYLMTT. Residues 527–781 form the EAL domain; sequence NIWIARNIRH…AWDKSGKLVK (255 aa).

It localises to the cell membrane. The enzyme catalyses 3',3'-c-di-GMP + H2O = 5'-phosphoguanylyl(3'-&gt;5')guanosine + H(+). Its function is as follows. Phosphodiesterase (PDE) that catalyzes the hydrolysis of cyclic-di-GMP (c-di-GMP) to 5'-pGpG. Overexpression reduces biofilm formation. Cyclic-di-GMP is a second messenger which controls cell surface-associated traits in bacteria. This Escherichia coli (strain K12) protein is Probable cyclic di-GMP phosphodiesterase PdeI.